Consider the following 119-residue polypeptide: Ribonuclease P protein component (119 aa).

Belongs to the RnpA family. In terms of assembly, consists of a catalytic RNA component (M1 or rnpB) and a protein subunit.

The enzyme catalyses Endonucleolytic cleavage of RNA, removing 5'-extranucleotides from tRNA precursor.. In terms of biological role, RNaseP catalyzes the removal of the 5'-leader sequence from pre-tRNA to produce the mature 5'-terminus. It can also cleave other RNA substrates such as 4.5S RNA. The protein component plays an auxiliary but essential role in vivo by binding to the 5'-leader sequence and broadening the substrate specificity of the ribozyme. In Erwinia tasmaniensis (strain DSM 17950 / CFBP 7177 / CIP 109463 / NCPPB 4357 / Et1/99), this protein is Ribonuclease P protein component.